A 127-amino-acid chain; its full sequence is Riboflavin kinase (127 aa).

10 to 15 (GLGEGR) contacts CDP. The Mg(2+) site is built by Thr39 and Asn41. Positions 96 and 104 each coordinate FMN. 109 to 112 (VHLR) is a binding site for CDP.

The protein belongs to the archaeal riboflavin kinase family. The cofactor is Mg(2+).

The enzyme catalyses riboflavin + CTP = CDP + FMN + H(+). It functions in the pathway cofactor biosynthesis; FMN biosynthesis; FMN from riboflavin (CTP route): step 1/1. Functionally, catalyzes the CTP-dependent phosphorylation of riboflavin (vitamin B2) to form flavin mononucleotide (FMN). The chain is Riboflavin kinase from Methanococcus maripaludis (strain C7 / ATCC BAA-1331).